The primary structure comprises 856 residues: Envelope glycoprotein GP350 (856 aa).

Residues 1–809 (MEAALLVCQY…TSQPRFSNLS (809 aa)) lie on the Virion surface side of the membrane. Residues asparagine 47, asparagine 87, asparagine 114, asparagine 166, asparagine 169, asparagine 195, asparagine 229, asparagine 277, asparagine 318, asparagine 328, asparagine 345, asparagine 356, asparagine 378, asparagine 386, asparagine 411, asparagine 435, asparagine 443, asparagine 457, asparagine 497, asparagine 519, asparagine 533, asparagine 554, asparagine 568, asparagine 582, asparagine 585, asparagine 603, and asparagine 614 are each glycosylated (N-linked (GlcNAc...) asparagine; by host). A disordered region spans residues 421-779 (FSKAPESTTT…PPSTSSELRP (359 aa)). Residues 427 to 437 (STTTSPTSNTT) show a composition bias toward low complexity. Polar residues predominate over residues 442–488 (PNTTTGLPSSTHVPTNLTAPASTGPTVSTADVTSPTPAGTTSGASPV). The span at 507-570 (TSPTPAVTTP…AVTTPTPNAT (64 aa)) shows a compositional bias: low complexity. Residues 575–616 (GETSPQANTTNHTLGGTSSTPVVTSQPKNATSAVTTGQHNIT) are compositionally biased toward polar residues. Residues 617-631 (SSSTSSMSLRPSSIS) are compositionally biased toward low complexity. An N-linked (GlcNAc...) asparagine; by host glycan is attached at asparagine 650. The span at 654-669 (VTPASTSTHHVSTSSP) shows a compositional bias: low complexity. Over residues 674–690 (GTTSQASGPGNSSTSTK) the composition is skewed to polar residues. N-linked (GlcNAc...) asparagine; by host glycosylation is found at asparagine 684, asparagine 695, asparagine 704, and asparagine 729. Positions 703-730 (KNATSPQAPSGQKTAVPTVTSTGGKANS) are enriched in polar residues. Low complexity predominate over residues 731-741 (TTGGKHTTGHG). Residues 743-776 (RTSTEPTTDYGGDSTTPRTRYNATTYLPPSTSSE) are compositionally biased toward polar residues. Residues asparagine 764 and asparagine 807 are each glycosylated (N-linked (GlcNAc...) asparagine; by host). Residues 810–830 (MLVLQWASLAVLTLLLLLVMA) form a helical membrane-spanning segment. Residues 831–856 (DCAFRRNLSTSHTYTTPPYDDAETYV) are Intravirion-facing.

It belongs to the Epstein-Barr GP350 family. Interacts with host CR2. Post-translationally, extensively glycosylated.

The protein resides in the virion membrane. It is found in the host membrane. In terms of biological role, initiates virion attachment to host B-lymphocyte cell, leading to virus entry. Acts by binding to host CR2 at the surface of B-lymphocytes, facilitating the binding of viral glycoprotein gp42 to HLA class II molecules. Attachment triggers virion-host membrane fusion and invasion of the host cell. The sequence is that of Envelope glycoprotein GP350 from Homo sapiens (Human).